The chain runs to 379 residues: Lipoyl synthase, mitochondrial (379 aa).

[4Fe-4S] cluster contacts are provided by Cys-106, Cys-111, Cys-117, Cys-137, Cys-141, Cys-144, and Ser-352. Positions 122–341 constitute a Radical SAM core domain; the sequence is EHGTQTATIM…EERGNALGFL (220 aa).

Belongs to the radical SAM superfamily. Lipoyl synthase family. [4Fe-4S] cluster serves as cofactor.

It is found in the mitochondrion. The enzyme catalyses [[Fe-S] cluster scaffold protein carrying a second [4Fe-4S](2+) cluster] + N(6)-octanoyl-L-lysyl-[protein] + 2 oxidized [2Fe-2S]-[ferredoxin] + 2 S-adenosyl-L-methionine + 4 H(+) = [[Fe-S] cluster scaffold protein] + N(6)-[(R)-dihydrolipoyl]-L-lysyl-[protein] + 4 Fe(3+) + 2 hydrogen sulfide + 2 5'-deoxyadenosine + 2 L-methionine + 2 reduced [2Fe-2S]-[ferredoxin]. It participates in protein modification; protein lipoylation via endogenous pathway; protein N(6)-(lipoyl)lysine from octanoyl-[acyl-carrier-protein]: step 2/2. Its function is as follows. Catalyzes the radical-mediated insertion of two sulfur atoms into the C-6 and C-8 positions of the octanoyl moiety bound to the lipoyl domains of lipoate-dependent enzymes, thereby converting the octanoylated domains into lipoylated derivatives. This is Lipoyl synthase, mitochondrial from Drosophila erecta (Fruit fly).